A 558-amino-acid polypeptide reads, in one-letter code: INCREASED PETAL GROWTH ANISOTROPY 1-like protein 2 (558 aa).

The segment covering 1-15 (MSRISTTSTTPSRVR) has biased composition (low complexity). Positions 1–54 (MSRISTTSTTPSRVRAANSHYSVISKPRAQDDNGLTGGKPKSSGYDVKNDPAKR) are disordered. The stretch at 104–180 (VMATAAAEDE…EAKISSLSSN (77 aa)) forms a coiled coil. The disordered stretch occupies residues 207–285 (KVKKEVAVES…AARAQKSPPV (79 aa)). Pro residues-rich tracts occupy residues 221-236 (PPSPSPSRLPPTPPLP) and 256-272 (FAPPTPPPPPPPPPPRP). Positions 392–448 (KADTLQEAAVEYRELKKLEKELSSYSDDPNIHYGVALKKMANLLDKSEQRIRRLVRL) form a coiled coil.

The protein belongs to the IPGA1 family.

Its subcellular location is the cytoplasm. It is found in the cytoskeleton. Functionally, microtubule-associated protein probably involved in the regulation of microtubule organization. The polypeptide is INCREASED PETAL GROWTH ANISOTROPY 1-like protein 2 (Arabidopsis thaliana (Mouse-ear cress)).